Reading from the N-terminus, the 25-residue chain is Cytochrome c oxidase subunit 1 (25 aa).

It belongs to the heme-copper respiratory oxidase family. Cu(2+) serves as cofactor. Heme is required as a cofactor.

It is found in the cell inner membrane. It carries out the reaction 4 Fe(II)-[cytochrome c] + O2 + 8 H(+)(in) = 4 Fe(III)-[cytochrome c] + 2 H2O + 4 H(+)(out). The protein operates within energy metabolism; oxidative phosphorylation. In terms of biological role, subunit I and II form the functional core of the enzyme complex. Electrons originating in cytochrome c are transferred via heme a and Cu(A) to the binuclear center formed by heme a3 and Cu(B). This cytochrome c oxidase shows proton pump activity across the membrane in addition to the electron transfer. This Paracoccus versutus (Thiobacillus versutus) protein is Cytochrome c oxidase subunit 1 (ctaD).